The primary structure comprises 193 residues: T-cell receptor-associated transmembrane adapter 1 (193 aa).

Residues 1-10 are Extracellular-facing; sequence MSGNAECHFS. Residues 11–31 form a helical; Signal-anchor for type III membrane protein membrane-spanning segment; it reads IWAILAFLGLALTISLIFNIF. At 32–193 the chain is on the cytoplasmic side; it reads HCVEKQRQEK…LHSLDYDLAQ (162 aa). S46 is modified (phosphoserine). At Y80 the chain carries Phosphotyrosine. The interval 80 to 83 is interaction with PIK3R1; that stretch reads YEQM. Residues 116–166 are disordered; it reads NEGKRRKPRKQKSHLSDKDEEGQMHAKDISLSKTTLVDSYPPESEAIEENI. Residues 119 to 128 show a composition bias toward basic residues; the sequence is KRRKPRKQKS. Basic and acidic residues predominate over residues 129–145; it reads HLSDKDEEGQMHAKDIS.

As to quaternary structure, homodimer; disulfide-linked. Interacts with CD3Z. When phosphorylated, interacts with PIK3R1. Post-translationally, phosphorylated on tyrosines upon TCR activation.

The protein resides in the cell membrane. In terms of biological role, stabilizes the TCR (T-cell antigen receptor)/CD3 complex at the surface of T-cells. The polypeptide is T-cell receptor-associated transmembrane adapter 1 (TRAT1) (Bos taurus (Bovine)).